Reading from the N-terminus, the 470-residue chain is MTVRTRFAPSPTGFLHVGGVRTALFSWLYAKHHNGQFILRIEDTDRERSTQESVQAILDGMAWLGLNFDEGPYYQTERYARYQQVAQQLLEEGKAYRCQCSKERLEALREAQLAAKEKPRYDGHCRNQSLPDSGIPYVIRFRNPDGGIVSFHDEVYGDIHVDNSELDDLILVRSDGHPTYNFAVVIDDWDMKITHVIRGDDHINNTPRQINLFKALDAPVPVFAHLPMILGEDGKRLSKRHGAVSVLQFKELGVLPHALLNYLVRLGWSHGDQEIFSVQEMITSFDLKNVSRGVSSFNYDKLYWLNQHYQKSDSPESVANALQWHFEQAGIDLNQGPDLKDLVAVQAERCKSLAEMCQISQYFYTDTIEYNEDAVKKHLRPVVLEPLMVLHERLKALDEWKNDKIQECINDVSLQFDLNLGKIAQPLRVAVTGSGTSPSIDMTLALLGKNKSIKRLEDALEKIRARASVV.

Positions 9–19 match the 'HIGH' region motif; the sequence is PSPTGFLHVGG. Residues 236 to 240 carry the 'KMSKS' region motif; sequence RLSKR. ATP is bound at residue lysine 239.

Belongs to the class-I aminoacyl-tRNA synthetase family. Glutamate--tRNA ligase type 1 subfamily. In terms of assembly, monomer.

The protein localises to the cytoplasm. The enzyme catalyses tRNA(Glu) + L-glutamate + ATP = L-glutamyl-tRNA(Glu) + AMP + diphosphate. In terms of biological role, catalyzes the attachment of glutamate to tRNA(Glu) in a two-step reaction: glutamate is first activated by ATP to form Glu-AMP and then transferred to the acceptor end of tRNA(Glu). This is Glutamate--tRNA ligase from Legionella pneumophila (strain Lens).